The primary structure comprises 441 residues: Xylose isomerase (441 aa).

Catalysis depends on residues histidine 99 and aspartate 102. The Mn(2+) site is built by glutamate 230, glutamate 266, aspartate 294, aspartate 305, aspartate 307, and aspartate 337.

Belongs to the xylose isomerase family. Homotetramer. Requires Mn(2+) as cofactor.

The protein resides in the cytoplasm. The catalysed reaction is alpha-D-xylose = alpha-D-xylulofuranose. This chain is Xylose isomerase (xylA), found in Geobacillus stearothermophilus (Bacillus stearothermophilus).